The following is a 219-amino-acid chain: Ribose-5-phosphate isomerase A (219 aa).

Residues 28 to 31 (TGST), 81 to 84 (DGAD), and 94 to 97 (KGGG) each bind substrate. Glu103 acts as the Proton acceptor in catalysis. Lys121 contributes to the substrate binding site.

The protein belongs to the ribose 5-phosphate isomerase family. In terms of assembly, homodimer.

It carries out the reaction aldehydo-D-ribose 5-phosphate = D-ribulose 5-phosphate. It functions in the pathway carbohydrate degradation; pentose phosphate pathway; D-ribose 5-phosphate from D-ribulose 5-phosphate (non-oxidative stage): step 1/1. In terms of biological role, catalyzes the reversible conversion of ribose-5-phosphate to ribulose 5-phosphate. This chain is Ribose-5-phosphate isomerase A, found in Shewanella pealeana (strain ATCC 700345 / ANG-SQ1).